Reading from the N-terminus, the 380-residue chain is Putative 8-amino-7-oxononanoate synthase (380 aa).

Position 18 (Arg18) interacts with substrate. 106–107 (GY) provides a ligand contact to pyridoxal 5'-phosphate. His131 contacts substrate. Pyridoxal 5'-phosphate-binding positions include Ser179, 205–208 (DEAH), and 236–239 (TFGK). Lys239 carries the N6-(pyridoxal phosphate)lysine modification. Thr352 provides a ligand contact to substrate.

Belongs to the class-II pyridoxal-phosphate-dependent aminotransferase family. BioF subfamily. In terms of assembly, homodimer. Pyridoxal 5'-phosphate is required as a cofactor.

It catalyses the reaction 6-carboxyhexanoyl-[ACP] + L-alanine + H(+) = (8S)-8-amino-7-oxononanoate + holo-[ACP] + CO2. Its pathway is cofactor biosynthesis; biotin biosynthesis. Functionally, catalyzes the decarboxylative condensation of pimeloyl-[acyl-carrier protein] and L-alanine to produce 8-amino-7-oxononanoate (AON), [acyl-carrier protein], and carbon dioxide. This is Putative 8-amino-7-oxononanoate synthase (bioF) from Neisseria meningitidis serogroup C / serotype 2a (strain ATCC 700532 / DSM 15464 / FAM18).